We begin with the raw amino-acid sequence, 512 residues long: 23S rRNA (uracil(1939)-C(5))-methyltransferase RlmD (512 aa).

Residues 1-14 (MQPTDSKTSTSDTT) show a composition bias toward low complexity. Residues 1–45 (MQPTDSKTSTSDTTEQPNETQTITIPPSKKKSKPSSKTRRRLKDA) are disordered. Over residues 15–25 (EQPNETQTITI) the composition is skewed to polar residues. Over residues 28-42 (SKKKSKPSSKTRRRL) the composition is skewed to basic residues. The TRAM domain maps to 41-113 (RLKDAEPLPF…TSFEEGDAVN (73 aa)). [4Fe-4S] cluster is bound by residues C127, C133, C136, and C215. Q340, F369, N374, E393, D420, and D441 together coordinate S-adenosyl-L-methionine. The active-site Nucleophile is the C467.

It belongs to the class I-like SAM-binding methyltransferase superfamily. RNA M5U methyltransferase family. RlmD subfamily.

It catalyses the reaction uridine(1939) in 23S rRNA + S-adenosyl-L-methionine = 5-methyluridine(1939) in 23S rRNA + S-adenosyl-L-homocysteine + H(+). In terms of biological role, catalyzes the formation of 5-methyl-uridine at position 1939 (m5U1939) in 23S rRNA. This chain is 23S rRNA (uracil(1939)-C(5))-methyltransferase RlmD, found in Psychrobacter arcticus (strain DSM 17307 / VKM B-2377 / 273-4).